We begin with the raw amino-acid sequence, 127 residues long: uncharacterized protein (127 aa).

Residues 12-32 (FFFLILFYFCIISSFLFLFIF) traverse the membrane as a helical segment.

The protein localises to the membrane. This is an uncharacterized protein from Saccharomyces cerevisiae (strain ATCC 204508 / S288c) (Baker's yeast).